The primary structure comprises 330 residues: Glucokinase (330 aa).

The protein belongs to the ROK (NagC/XylR) family.

Its subcellular location is the cytoplasm. The catalysed reaction is D-glucose + ATP = D-glucose 6-phosphate + ADP + H(+). The polypeptide is Glucokinase (glcK) (Halalkalibacterium halodurans (strain ATCC BAA-125 / DSM 18197 / FERM 7344 / JCM 9153 / C-125) (Bacillus halodurans)).